A 460-amino-acid chain; its full sequence is ATP synthase subunit beta (460 aa).

Residue 150–157 (GGAGVGKT) coordinates ATP.

This sequence belongs to the ATPase alpha/beta chains family. As to quaternary structure, F-type ATPases have 2 components, CF(1) - the catalytic core - and CF(0) - the membrane proton channel. CF(1) has five subunits: alpha(3), beta(3), gamma(1), delta(1), epsilon(1). CF(0) has three main subunits: a(1), b(2) and c(9-12). The alpha and beta chains form an alternating ring which encloses part of the gamma chain. CF(1) is attached to CF(0) by a central stalk formed by the gamma and epsilon chains, while a peripheral stalk is formed by the delta and b chains.

The protein localises to the cell inner membrane. It catalyses the reaction ATP + H2O + 4 H(+)(in) = ADP + phosphate + 5 H(+)(out). Its function is as follows. Produces ATP from ADP in the presence of a proton gradient across the membrane. The catalytic sites are hosted primarily by the beta subunits. The protein is ATP synthase subunit beta of Salmonella paratyphi A (strain ATCC 9150 / SARB42).